A 504-amino-acid polypeptide reads, in one-letter code: Bacterial leucyl aminopeptidase (504 aa).

The first 21 residues, 1 to 21, serve as a signal peptide directing secretion; that stretch reads MKYTKTLLAMVLSATFCQAYA. Residues 22-106 constitute a propeptide that is removed on maturation; that stretch reads EDKVWISIGA…AMPTTLASFV (85 aa). Residues H203, D223, E258, and D285 each contribute to the Zn(2+) site. An intrachain disulfide couples C329 to C333. Residue H362 coordinates Zn(2+). Residues 406 to 504 constitute a propeptide, removed in mature form; the sequence is LEDGVPVTDL…SGASLKASTF (99 aa).

This sequence belongs to the peptidase M28 family. M28E subfamily. Zn(2+) is required as a cofactor.

Its subcellular location is the secreted. It catalyses the reaction Release of an N-terminal amino acid, preferentially leucine, but not glutamic or aspartic acids.. The protein is Bacterial leucyl aminopeptidase of Vibrio proteolyticus (Aeromonas proteolytica).